The chain runs to 231 residues: Orotidine 5'-phosphate decarboxylase (231 aa).

Residues D11, K34, 61–70, T117, R179, Q188, G208, and R209 contribute to the substrate site; that span reads DLKLHDIPNT. K63 acts as the Proton donor in catalysis.

Belongs to the OMP decarboxylase family. Type 1 subfamily. Homodimer.

The enzyme catalyses orotidine 5'-phosphate + H(+) = UMP + CO2. Its pathway is pyrimidine metabolism; UMP biosynthesis via de novo pathway; UMP from orotate: step 2/2. Its function is as follows. Catalyzes the decarboxylation of orotidine 5'-monophosphate (OMP) to uridine 5'-monophosphate (UMP). This chain is Orotidine 5'-phosphate decarboxylase, found in Streptococcus thermophilus (strain ATCC BAA-491 / LMD-9).